Consider the following 741-residue polypeptide: 1,4-alpha-glucan branching enzyme GlgB 2 (741 aa).

Positions 1–38 (MALRDTSIPEPSGPVPPAPGACATAPPLDPTDRGRLLA) are disordered. The active-site Nucleophile is D421. E474 serves as the catalytic Proton donor.

This sequence belongs to the glycosyl hydrolase 13 family. GlgB subfamily. Monomer.

The enzyme catalyses Transfers a segment of a (1-&gt;4)-alpha-D-glucan chain to a primary hydroxy group in a similar glucan chain.. It participates in glycan biosynthesis; glycogen biosynthesis. Functionally, catalyzes the formation of the alpha-1,6-glucosidic linkages in glycogen by scission of a 1,4-alpha-linked oligosaccharide from growing alpha-1,4-glucan chains and the subsequent attachment of the oligosaccharide to the alpha-1,6 position. The protein is 1,4-alpha-glucan branching enzyme GlgB 2 (glgB2) of Streptomyces coelicolor (strain ATCC BAA-471 / A3(2) / M145).